The chain runs to 123 residues: MDKIEELKIEELKIEIPQRKTKFFHDSENSDKRDEEETLNPTITSKAKILIKSKNFWIETLIFVISVFGALCVAFGIMLIGFLLWLVSNTISILYFIKQKQYPLSLQQMVFLITTCIGVYNNV.

2 consecutive transmembrane segments (helical) span residues 67–87 (VFGA…LWLV) and 104–121 (LSLQ…GVYN).

The protein localises to the membrane. This chain is Transmembrane protein 049L, found in Acheta domesticus (House cricket).